A 362-amino-acid polypeptide reads, in one-letter code: Probable non-structural 41.0 kDa protein (362 aa).

Positions 341–362 (MNAAAPSAPTPTELPVFSPPSS) are disordered.

The chain is Probable non-structural 41.0 kDa protein (S6) from Maize rough dwarf virus (MRDV).